We begin with the raw amino-acid sequence, 74 residues long: Mucroporin (74 aa).

Positions Met-1–Ala-22 are cleaved as a signal peptide. Position 39 is a lysine amide (Lys-39). A propeptide spanning residues Gln-45–Tyr-74 is cleaved from the precursor.

Belongs to the non-disulfide-bridged peptide (NDBP) superfamily. Short antimicrobial peptide (group 4) family. Expressed by the venom gland.

It localises to the secreted. It is found in the target cell membrane. Functionally, mucroporin: cationic host defense peptide that have antibacterial activity by breaking membranes. Is more effective on Gram-positive than on Gram-negative bacteria. Minimum inhibitory concentrations (MIC) are the following: MIC=&gt;100 ug/ml against E.coli AB94012, MIC=&gt;100 ug/ml against P.aeruginosa AB93066, MIC=25 ug/ml against B.thuringiensis AB92037, MIC=50 ug/ml against B.subtilis AB91021, MIC=25 ug/ml against S.aureus AB94004, and MIC=25 ug/ml against the methicillin-resistant coagulase-negative Staphylococcus. Its synthetic analog mucroporin-M1 is more effective. Does not show antiviral activity against any of measles, SARS-CoV, influenza H5N1, hepatitis B and HIV-1 viruses. In terms of biological role, mutant mucroporin-M1: can inhibit Gram-positive bacteria at low concentrations and antibiotic-resistant pathogens. Minimum inhibitory concentrations (MIC) are the following: MIC=12.5 ug/ml against E.coli AB94012, MIC=100 ug/ml against P.aeruginosa AB93066, MIC=25 ug/ml against B.thuringiensis AB92037, MIC=25 ug/ml against B.subtilis AB91021, MIC=5 ug/ml against S.aureus AB94004, and MIC=5 ug/ml against the methicillin-resistant coagulase-negative Staphylococcus. Also shows antiviral activities against measles (EC(50) of 7.15 ug/ml), SARS-CoV (EC(50) of 14.46 ug/ml), influenza H5N1 viruses (EC(50) of 2.10 mug/ml), HIV-1, and hepatitis B virus. The sequence is that of Mucroporin from Lychas mucronatus (Chinese swimming scorpion).